Consider the following 304-residue polypeptide: ULP1-interacting protein 4 (304 aa).

The segment at Asp-72–Thr-269 is disordered. The span at Glu-73 to Asn-83 shows a compositional bias: basic and acidic residues. Residues Thr-129–Gly-149 are compositionally biased toward polar residues. Ser-140 carries the phosphoserine modification. The segment covering Glu-155–Glu-183 has biased composition (basic and acidic residues). Residues Ser-185 and Ser-205 each carry the phosphoserine modification.

Interacts with ULP1.

It localises to the endoplasmic reticulum membrane. The protein resides in the mitochondrion outer membrane. The protein localises to the nucleus envelope. The polypeptide is ULP1-interacting protein 4 (UIP4) (Saccharomyces cerevisiae (strain ATCC 204508 / S288c) (Baker's yeast)).